Consider the following 221-residue polypeptide: MTQQFWGPCLFSLFMAVLAQETLDPQKSKVDCNKGVAGTVYEYGANTLDGGEYVQFQQYAGKHILFVNVASFCGLTATYPELNTLQEELRPFNVSVLGFPCNQFGKQEPGKNSEILLGLKYVRPGGGFVPNFQLFEKGDVNGDNEQKVFSFLKSSCPPTSELLGSPEHLFWDPMKVHDIRWNFEKFLVGPDGAPVMRWFHQTPVRVVQSDIMEYLNQTRTQ.

The N-terminal stretch at 1 to 19 (MTQQFWGPCLFSLFMAVLA) is a signal peptide. C73 is an active-site residue.

It belongs to the glutathione peroxidase family. Expressed in the Bowman glands.

Its subcellular location is the secreted. It catalyses the reaction 2 glutathione + H2O2 = glutathione disulfide + 2 H2O. The chain is Glutathione peroxidase 6 (Gpx6) from Rattus norvegicus (Rat).